The chain runs to 699 residues: DnaJ homolog subfamily C member 14 (699 aa).

The segment at 1–230 (MAQKHPGEGG…RHRLGRKRSQ (230 aa)) is disordered. Residues 75-84 (HGPPRGPGPP) show a composition bias toward pro residues. Residues 86-102 (AEEDPDQSEASSEESGV) show a composition bias toward acidic residues. Residues 117 to 133 (DGNSSFLSIPSTCNCQG) show a composition bias toward polar residues. Acidic residues predominate over residues 163-176 (GEDEELEGEYDEEE). Residues 203-218 (PAKEDTREGGRRDPRS) are compositionally biased toward basic and acidic residues. Residues 219 to 228 (PGRHRLGRKR) are compositionally biased toward basic residues. Transmembrane regions (helical) follow at residues 251 to 271 (AGFW…ETCG), 301 to 321 (GWAQ…AGLF), and 327 to 347 (LVGA…QLGW). One can recognise a J domain in the interval 444 to 508 (NPFHVLGVEA…ERRKEYEMKR (65 aa)). The segment at 655–699 (MSNGNFFAAPQPGPGATAASKPNSTVPKGEAKPKRRKKVRRPFQR) is disordered. Low complexity predominate over residues 662–673 (AAPQPGPGATAA). Residues 687-699 (PKRRKKVRRPFQR) show a composition bias toward basic residues.

In terms of assembly, interacts with the FxxxFxxxF motif of DRD1 via its C-terminal domain. Interacts with pestivirus nonstructural protein NS2.

It is found in the endoplasmic reticulum membrane. In terms of biological role, regulates the export of target proteins, such as DRD1, from the endoplasmic reticulum to the cell surface. Promotes cleavage of pestivirus polyprotein. This is DnaJ homolog subfamily C member 14 (DNAJC14) from Bos taurus (Bovine).